Reading from the N-terminus, the 739-residue chain is Nuclear pore complex protein NUP62 (739 aa).

19 tandem repeats follow at residues 6–7, 17–18, 50–51, 52–53, 68–69, 70–71, 78–79, 80–81, 91–92, 93–94, 108–109, 110–111, 124–125, 141–142, 159–160, 174–175, 186–187, 207–208, and 221–222. Positions 6–450 are 26 X 2 AA repeats of F-G; the sequence is FGQSNSVGGF…AATFSTTGFG (445 aa). A disordered region spans residues 18–67; that stretch reads GSSSATNSSSASSTTSPLSFSFNQSSNPSSTGFGFGSSVSSTPASSTTPS. Low complexity predominate over residues 79–218; the sequence is GFGSSASSST…ASSSAATSTS (140 aa). The segment at 79–245 is disordered; that stretch reads GFGSSASSST…VASSAPGSSS (167 aa). The segment covering 232 to 245 has biased composition (low complexity); sequence PSFSVASSAPGSSS. A run of 5 repeats spans residues 248–249, 271–272, 280–281, 308–309, and 366–367. 3 disordered regions span residues 281-329, 341-366, and 399-418; these read GSSS…ASPF, TASSTTSSTTPSAPPQTASSSSSFSF, and TTTSSSTPAATSAPASSAPA. Tandem repeats lie at residues 426 to 427 and 449 to 450. The interval 471-533 is disordered; that stretch reads KTSTPASSSQ…AVAPVAGSPK (63 aa). The segment covering 472-519 has biased composition (low complexity); it reads TSTPASSSQPQTTSPAFSFSLPSSTSTTAPATSSATTTQTTLVVPSSS. Positions 584–674 form a coiled coil; the sequence is RLEIEVAKVV…IRSIIQSVNA (91 aa).

Belongs to the nucleoporin NSP1/NUP62 family. Part of the nuclear pore complex (NPC). The NPC has an eight-fold symmetrical structure comprising a central transport channel and two rings, the cytoplasmic and nuclear rings, to which eight filaments are attached. The cytoplasmic filaments have loose ends, while the nuclear filaments are joined in a distal ring, forming a nuclear basket. NPCs are highly dynamic in configuration and composition, and can be devided in 3 subcomplexes, the NUP62 subcomplex, the NUP107-160 subcomplex and the NUP93 subcomplex, containing approximately 30 different nucleoporin proteins. Interacts with NUP58 and the importin KPNB1.

It localises to the nucleus envelope. The protein localises to the nucleus. It is found in the nuclear pore complex. In Arabidopsis thaliana (Mouse-ear cress), this protein is Nuclear pore complex protein NUP62.